The sequence spans 235 residues: Orotidine 5'-phosphate decarboxylase (235 aa).

Residues Asp9, Lys31, 58–67 (DLKFHDIPNT), Thr121, Arg180, Gln190, Gly210, and Arg211 each bind substrate. The Proton donor role is filled by Lys60.

Belongs to the OMP decarboxylase family. Type 1 subfamily. As to quaternary structure, homodimer.

It catalyses the reaction orotidine 5'-phosphate + H(+) = UMP + CO2. It participates in pyrimidine metabolism; UMP biosynthesis via de novo pathway; UMP from orotate: step 2/2. Its function is as follows. Catalyzes the decarboxylation of orotidine 5'-monophosphate (OMP) to uridine 5'-monophosphate (UMP). This Nitratidesulfovibrio vulgaris (strain ATCC 29579 / DSM 644 / CCUG 34227 / NCIMB 8303 / VKM B-1760 / Hildenborough) (Desulfovibrio vulgaris) protein is Orotidine 5'-phosphate decarboxylase.